The chain runs to 171 residues: 16S rRNA aminocarboxypropyltransferase (171 aa).

S-adenosyl-L-methionine-binding residues include T17, L67, L90, and T109.

It belongs to the TDD superfamily. TSR3 family.

Its subcellular location is the cytoplasm. It catalyses the reaction an N(1)-methylpseudouridine in rRNA + S-adenosyl-L-methionine = N(1)-methyl-N(3)-[(3S)-3-amino-3-carboxypropyl]pseudouridine in rRNA + S-methyl-5'-thioadenosine + H(+). Functionally, aminocarboxypropyltransferase that catalyzes the aminocarboxypropyl transfer on pseudouridine corresponding to position 914 in M.jannaschii 16S rRNA. It constitutes the last step in biosynthesis of the hypermodified N1-methyl-N3-(3-amino-3-carboxypropyl) pseudouridine (m1acp3-Psi). The sequence is that of 16S rRNA aminocarboxypropyltransferase from Methanobrevibacter smithii (strain ATCC 35061 / DSM 861 / OCM 144 / PS).